The sequence spans 496 residues: Zinc finger protein PLAGL2 (496 aa).

C2H2-type zinc fingers lie at residues 68 to 92 (YSCPQLHCGKAFASKYKLYRHMATH), 98 to 120 (HQCMYCDKMFHRKDHLRNHLQTH), 127 to 149 (LHCSECGKNYNTKLGYRRHLAMH), 156 to 178 (LSCKVCLQTFESTQALLEHLKAH), 191 to 213 (HPCDHCDRRFYTRKDVRRHLVVH), and 219 to 242 (FLCQYCAQRFGRKDHLTRHVKKSH).

The protein belongs to the krueppel C2H2-type zinc-finger protein family.

The protein localises to the nucleus. Shows weak transcriptional activatory activity. This Homo sapiens (Human) protein is Zinc finger protein PLAGL2 (PLAGL2).